We begin with the raw amino-acid sequence, 513 residues long: GMP synthase [glutamine-hydrolyzing] (513 aa).

Residues 9 to 198 (LILVLDFGSQ…VRRVCDCKGQ (190 aa)) form the Glutamine amidotransferase type-1 domain. The active-site Nucleophile is C86. Residues H172 and E174 contribute to the active site. One can recognise a GMPS ATP-PPase domain in the interval 199–388 (WTMENFIEIE…LGIPEHLVWR (190 aa)). Residue 226–232 (SGGVDSS) participates in ATP binding.

In terms of assembly, homodimer.

It carries out the reaction XMP + L-glutamine + ATP + H2O = GMP + L-glutamate + AMP + diphosphate + 2 H(+). The protein operates within purine metabolism; GMP biosynthesis; GMP from XMP (L-Gln route): step 1/1. Catalyzes the synthesis of GMP from XMP. The sequence is that of GMP synthase [glutamine-hydrolyzing] from Staphylococcus aureus (strain Mu3 / ATCC 700698).